Consider the following 217-residue polypeptide: Oxygen regulatory protein NreC (217 aa).

The 118-residue stretch at 2-119 (KIVIADDHAV…QLISAVRTVY (118 aa)) folds into the Response regulatory domain. At aspartate 53 the chain carries 4-aspartylphosphate. The region spanning 148–213 (TNDPFRILSK…ELVEYALKKK (66 aa)) is the HTH luxR-type domain. The H-T-H motif DNA-binding region spans 172–191 (NKEIAEKLFVSVKTVEAHKT).

Post-translationally, phosphorylated by NreB.

It is found in the cytoplasm. Member of the two-component regulatory system NreB/NreC involved in the control of dissimilatory nitrate/nitrite reduction in response to oxygen. Phosphorylated NreC binds to a GC-rich palindromic sequence at the promoters of the nitrate (narGHJI) and nitrite (nir) reductase operons, as well as the putative nitrate transporter gene narT, and activates their expression. This is Oxygen regulatory protein NreC (nreC) from Staphylococcus carnosus (strain TM300).